Consider the following 309-residue polypeptide: Uracil phosphoribosyltransferase homolog (309 aa).

Residues 1-38 (MATELQCPDSMPCHNQQVNSASTPSPEQLRPGDLILDH) form a disordered region. The span at 13 to 26 (CHNQQVNSASTPSP) shows a compositional bias: polar residues. Serine 25 bears the Phosphoserine mark. GTP-binding positions include arginine 133, arginine 142, and 176 to 179 (EKGN). Arginine 186 serves as a coordination point for 5-phospho-alpha-D-ribose 1-diphosphate. The GTP site is built by arginine 203 and arginine 232. A 5-phospho-alpha-D-ribose 1-diphosphate-binding site is contributed by 238–246 (YPILSTGNT). Uracil is bound at residue 299-301 (THF).

The protein belongs to the UPRTase family. As to expression, highly expressed in leukocytes, liver, spleen and thymus, with lower expression in brain, lung and skeletal muscle.

It localises to the cytoplasm. Its subcellular location is the nucleus. In Homo sapiens (Human), this protein is Uracil phosphoribosyltransferase homolog (UPRT).